The sequence spans 215 residues: Deoxyribose-phosphate aldolase (215 aa).

Asp-90 functions as the Proton donor/acceptor in the catalytic mechanism. The active-site Schiff-base intermediate with acetaldehyde is Lys-152. The active-site Proton donor/acceptor is Lys-181.

The protein belongs to the DeoC/FbaB aldolase family. DeoC type 1 subfamily.

It localises to the cytoplasm. It catalyses the reaction 2-deoxy-D-ribose 5-phosphate = D-glyceraldehyde 3-phosphate + acetaldehyde. The protein operates within carbohydrate degradation; 2-deoxy-D-ribose 1-phosphate degradation; D-glyceraldehyde 3-phosphate and acetaldehyde from 2-deoxy-alpha-D-ribose 1-phosphate: step 2/2. Functionally, catalyzes a reversible aldol reaction between acetaldehyde and D-glyceraldehyde 3-phosphate to generate 2-deoxy-D-ribose 5-phosphate. In Ureaplasma urealyticum serovar 10 (strain ATCC 33699 / Western), this protein is Deoxyribose-phosphate aldolase.